Consider the following 143-residue polypeptide: General odorant-binding protein 28a (143 aa).

Positions 1–21 (MQSTPIILVAIVLLGAALVRA) are cleaved as a signal peptide. Cystine bridges form between Cys38-Cys69, Cys65-Cys123, and Cys113-Cys132.

As to expression, expressed in antenna, mostly on the medial and posterior surface of the third antennal segment.

The protein resides in the secreted. This is General odorant-binding protein 28a (Obp28a) from Drosophila melanogaster (Fruit fly).